The following is a 429-amino-acid chain: Enolase (429 aa).

Glutamine 166 contributes to the (2R)-2-phosphoglycerate binding site. Glutamate 208 (proton donor) is an active-site residue. 3 residues coordinate Mg(2+): aspartate 245, glutamate 289, and aspartate 316. Lysine 341, arginine 370, serine 371, and lysine 392 together coordinate (2R)-2-phosphoglycerate. Lysine 341 functions as the Proton acceptor in the catalytic mechanism.

The protein belongs to the enolase family. In terms of assembly, component of the RNA degradosome, a multiprotein complex involved in RNA processing and mRNA degradation. Mg(2+) serves as cofactor.

Its subcellular location is the cytoplasm. The protein resides in the secreted. The protein localises to the cell surface. The catalysed reaction is (2R)-2-phosphoglycerate = phosphoenolpyruvate + H2O. It participates in carbohydrate degradation; glycolysis; pyruvate from D-glyceraldehyde 3-phosphate: step 4/5. Its function is as follows. Catalyzes the reversible conversion of 2-phosphoglycerate (2-PG) into phosphoenolpyruvate (PEP). It is essential for the degradation of carbohydrates via glycolysis. The polypeptide is Enolase (Acinetobacter baumannii (strain AB307-0294)).